The primary structure comprises 435 residues: Glutamyl-tRNA reductase (435 aa).

Substrate-binding positions include 49–52, S109, 114–116, and Q120; these read TCNR and ETQ. The Nucleophile role is filled by C50. An NADP(+)-binding site is contributed by 189–194; it reads GAGEMS.

It belongs to the glutamyl-tRNA reductase family. As to quaternary structure, homodimer.

It catalyses the reaction (S)-4-amino-5-oxopentanoate + tRNA(Glu) + NADP(+) = L-glutamyl-tRNA(Glu) + NADPH + H(+). Its pathway is porphyrin-containing compound metabolism; protoporphyrin-IX biosynthesis; 5-aminolevulinate from L-glutamyl-tRNA(Glu): step 1/2. Its function is as follows. Catalyzes the NADPH-dependent reduction of glutamyl-tRNA(Glu) to glutamate 1-semialdehyde (GSA). In Listeria monocytogenes serotype 4b (strain CLIP80459), this protein is Glutamyl-tRNA reductase.